The chain runs to 67 residues: DNA-directed RNA polymerases I, II, and III subunit RPABC5 (67 aa).

Zn(2+)-binding residues include Cys7, Cys10, Cys44, and Cys45.

This sequence belongs to the archaeal Rpo10/eukaryotic RPB10 RNA polymerase subunit family. In terms of assembly, component of the RNA polymerase I (Pol I), RNA polymerase II (Pol II) and RNA polymerase III (Pol III) complexes consisting of at least 13, 12 and 17 subunits, respectively.

The protein localises to the nucleus. In terms of biological role, DNA-dependent RNA polymerase catalyzes the transcription of DNA into RNA using the four ribonucleoside triphosphates as substrates. Common component of RNA polymerases I, II and III which synthesize ribosomal RNA precursors, mRNA precursors and many functional non-coding RNAs, and a small RNAs, such as 5S rRNA and tRNAs, respectively. Pol II is the central component of the basal RNA polymerase II transcription machinery. Pols are composed of mobile elements that move relative to each other. In Pol II, Polr2L is part of the core element with the central large cleft. This chain is DNA-directed RNA polymerases I, II, and III subunit RPABC5, found in Drosophila melanogaster (Fruit fly).